Here is a 124-residue protein sequence, read N- to C-terminus: Autophagy-related protein 8 (124 aa).

A lipid anchor (Phosphatidylethanolamine amidated glycine) is attached at Gly-116. The propeptide at 117–124 is removed in mature form; the sequence is GAGPLLEK.

Belongs to the ATG8 family. As to quaternary structure, conjugation to phosphatidylethanolamine (PE) leads to homodimerization. Interacts with ATG1, ATG3, ATG4, ATG7 and ATG12. The C-terminal 8 residues of ATG8 are removed by ATG4 to expose Gly-116 at the C-terminus. This Gly-116 forms then a thioester bond with the 'Cys-550' of ATG7 (E1-like activating enzyme) before being transferred to the 'Cys-244' of ATG3 (the specific E2 conjugating enzyme), in order to be finally amidated with phosphatidylethanolamine. This lipid modification anchors ATG8 to membranes and can be reversed by ATG4, releasing soluble ATG8.

The protein resides in the cytoplasmic vesicle. It localises to the cvt vesicle membrane. The protein localises to the autophagosome membrane. Its subcellular location is the vacuole membrane. Functionally, ubiquitin-like modifier involved in cytoplasm to vacuole transport (Cvt) vesicles and autophagosome formation. With ATG4, mediates the delivery of the vesicles and autophagosomes to the vacuole via the microtubule cytoskeleton. Required for selective autophagic degradation of the nucleus (nucleophagy) as well as for mitophagy which contributes to regulate mitochondrial quantity and quality by eliminating the mitochondria to a basal level to fulfill cellular energy requirements and preventing excess ROS production. Also participates in membrane fusion events that take place in the early secretory pathway. Also involved in endoplasmic reticulum-specific autophagic process and is essential for the survival of cells subjected to severe ER stress. The ATG8-PE conjugate mediates tethering between adjacent membranes and stimulates membrane hemifusion, leading to expansion of the autophagosomal membrane during autophagy. Moreover not only conjugation, but also subsequent ATG8-PE deconjugation is an important step required to facilitate multiple events during macroautophagy, and especially for efficient autophagosome biogenesis, the assembly of ATG9-containing tubulovesicular clusters into phagophores/autophagosomes, and for the disassembly of PAS-associated ATG components. The chain is Autophagy-related protein 8 from Kluyveromyces marxianus (strain DMKU3-1042 / BCC 29191 / NBRC 104275) (Yeast).